The sequence spans 130 residues: Large ribosomal subunit protein bL21 (130 aa).

A disordered region spans residues 110 to 130; that stretch reads KTAAQPAADEAVAANEVDSEA. The segment covering 112-130 has biased composition (low complexity); that stretch reads AAQPAADEAVAANEVDSEA.

It belongs to the bacterial ribosomal protein bL21 family. In terms of assembly, part of the 50S ribosomal subunit. Contacts protein L20.

In terms of biological role, this protein binds to 23S rRNA in the presence of protein L20. In Cyanothece sp. (strain PCC 7425 / ATCC 29141), this protein is Large ribosomal subunit protein bL21.